A 272-amino-acid polypeptide reads, in one-letter code: Glutamate 5-kinase (272 aa).

Lysine 14 is a binding site for ATP. Serine 54, aspartate 141, and asparagine 157 together coordinate substrate. ATP is bound by residues 177 to 178 (SD) and 219 to 225 (TGGMLSK).

This sequence belongs to the glutamate 5-kinase family.

The protein resides in the cytoplasm. The enzyme catalyses L-glutamate + ATP = L-glutamyl 5-phosphate + ADP. It functions in the pathway amino-acid biosynthesis; L-proline biosynthesis; L-glutamate 5-semialdehyde from L-glutamate: step 1/2. Its function is as follows. Catalyzes the transfer of a phosphate group to glutamate to form L-glutamate 5-phosphate. This is Glutamate 5-kinase from Streptococcus pyogenes serotype M28 (strain MGAS6180).